The following is a 570-amino-acid chain: Spastin (570 aa).

Residues methionine 1–leucine 35 lie on the Cytoplasmic side of the membrane. The helical intramembrane region spans serine 36–tryptophan 52. Topologically, residues leucine 53 to valine 570 are cytoplasmic. The 76-residue stretch at tyrosine 83 to leucine 158 folds into the MIT domain. The segment at alanine 186–asparagine 269 is disordered. Composition is skewed to polar residues over residues leucine 199–arginine 208, threonine 216–glycine 242, and valine 251–proline 261. Position 335–342 (glycine 335–threonine 342) interacts with ATP.

This sequence belongs to the AAA ATPase family. Spastin subfamily. Homohexamer. The homohexamer is stabilized by ATP-binding. The homohexamer may adopt a ring conformation through which microtubules pass prior to being severed. Interacts with microtubules.

The protein localises to the membrane. Its subcellular location is the cytoplasm. The protein resides in the cytoskeleton. It localises to the microtubule organizing center. It is found in the centrosome. The protein localises to the perinuclear region. Its subcellular location is the nucleus. The enzyme catalyses n ATP + n H2O + a microtubule = n ADP + n phosphate + (n+1) alpha/beta tubulin heterodimers.. In terms of biological role, ATP-dependent microtubule severing protein that specifically recognizes and cuts microtubules that are polyglutamylated. Preferentially recognizes and acts on microtubules decorated with short polyglutamate tails: severing activity increases as the number of glutamates per tubulin rises from one to eight, but decreases beyond this glutamylation threshold. Microtubule severing promotes reorganization of cellular microtubule arrays and the release of microtubules from the centrosome following nucleation. Required for membrane traffic from the endoplasmic reticulum (ER) to the Golgi and for completion of the abscission stage of cytokinesis. Also plays a role in axon growth and the formation of axonal branches. This chain is Spastin, found in Danio rerio (Zebrafish).